A 504-amino-acid polypeptide reads, in one-letter code: Histidine ammonia-lyase (504 aa).

A cross-link (5-imidazolinone (Ala-Gly)) is located at residues Ala142–Gly144. 2,3-didehydroalanine (Ser) is present on Ser143.

This sequence belongs to the PAL/histidase family. Contains an active site 4-methylidene-imidazol-5-one (MIO), which is formed autocatalytically by cyclization and dehydration of residues Ala-Ser-Gly.

It is found in the cytoplasm. The catalysed reaction is L-histidine = trans-urocanate + NH4(+). It participates in amino-acid degradation; L-histidine degradation into L-glutamate; N-formimidoyl-L-glutamate from L-histidine: step 1/3. The polypeptide is Histidine ammonia-lyase (Staphylococcus aureus (strain JH1)).